Here is a 454-residue protein sequence, read N- to C-terminus: UPF0210 protein Blon_2054/BLIJ_2131 (454 aa).

The protein belongs to the UPF0210 family. Homodimer.

The chain is UPF0210 protein Blon_2054/BLIJ_2131 from Bifidobacterium longum subsp. infantis (strain ATCC 15697 / DSM 20088 / JCM 1222 / NCTC 11817 / S12).